The sequence spans 196 residues: MSRTAEVRRDTKETQIRVWVDLDGTGASEVSTGVGFFDHMLDSFARHGGFDLKVETKGDLHIDMHHTVEDTGIVLGQAIKESLDGFKGIRRFGHAYIPMDETLSRCAIDLSNRPYLIWKTDFRTPKVGDMDTELFKEFHHAFAMNAGACVHLECLYGTNSHHIAESGFKALARALRQAVELDPKTHGHAPSTKGVL.

The protein belongs to the imidazoleglycerol-phosphate dehydratase family.

The protein localises to the cytoplasm. It catalyses the reaction D-erythro-1-(imidazol-4-yl)glycerol 3-phosphate = 3-(imidazol-4-yl)-2-oxopropyl phosphate + H2O. Its pathway is amino-acid biosynthesis; L-histidine biosynthesis; L-histidine from 5-phospho-alpha-D-ribose 1-diphosphate: step 6/9. This is Imidazoleglycerol-phosphate dehydratase from Phenylobacterium zucineum (strain HLK1).